A 530-amino-acid polypeptide reads, in one-letter code: Cation transporter HKT2;1 (530 aa).

The Cytoplasmic portion of the chain corresponds to 1-40; that stretch reads MTSIYHDFIHNKLQSFGRIGRYFVNFVVLAHRFIALHIHP. 2 helical membrane-spanning segments follow: residues 41–61 and 102–122; these read FWIQ…LLMF and IVVI…FLGL. Topologically, residues 123–186 are cytoplasmic; that stretch reads MLRLNHKHNP…DLKRSKRLRW (64 aa). Helical transmembrane passes span 187–207 and 260–280; these read FLGF…FLLV and GLLL…PLFL. The Cytoplasmic portion of the chain corresponds to 281–317; that stretch reads RLLIWFLGKVTKLRELKLMIKNPEELQYDYLLPKLPT. 2 helical membrane-spanning segments follow: residues 318–338 and 372–392; these read AFLA…FGAV and IDCS…MYLP. Over 393 to 418 the chain is Cytoplasmic; that stretch reads PSTTFALSNGDEKTANKKAKRKLGLV. 2 helical membrane passes run 419–439 and 494–514; these read VQNL…VAFI and SLSG…MLYG. Residues 515–530 lie on the Cytoplasmic side of the membrane; sequence RLKAFTKGTGEYWRLW.

This sequence belongs to the TrkH potassium transport family. HKT (TC 2.A.38.3) subfamily. Expressed in epidermis and vascular tissue of endodermis in roots, and in cells surrounding the vasculature in leaves.

It is found in the membrane. The catalysed reaction is Na(+)(in) = Na(+)(out). Seems to be involved in regulation of potassium-sodium homeostasis. Seems to act as a high-affinity sodium transporter, which mediates increased sodium uptake in roots under potassium deficiency and contributes to sodium accumulation and salt toxicity. Involved in nutritional sodium uptake and distribution in potassium-starved roots to allow plant growth. May also act as a potassium transporter. Functions as a sodium-potassium cotransporter. The sequence is that of Cation transporter HKT2;1 from Oryza sativa subsp. indica (Rice).